An 88-amino-acid chain; its full sequence is Small ribosomal subunit protein bS18 (88 aa).

The tract at residues 1–22 (MSTKNAKPKKEAQRRPSRKAKV) is disordered.

This sequence belongs to the bacterial ribosomal protein bS18 family. As to quaternary structure, part of the 30S ribosomal subunit. Forms a tight heterodimer with protein bS6.

Its function is as follows. Binds as a heterodimer with protein bS6 to the central domain of the 16S rRNA, where it helps stabilize the platform of the 30S subunit. This is Small ribosomal subunit protein bS18 (rpsR) from Thermus thermophilus (strain ATCC BAA-163 / DSM 7039 / HB27).